The following is a 331-amino-acid chain: LIM/homeobox protein Lhx9 (331 aa).

2 consecutive LIM zinc-binding domains span residues 71–132 (TLCA…FSVK) and 133–194 (RCAR…LVQG). Residues 253–275 (ETDLDRDQTYPPSQKTKRMRTSF) form a disordered region. The homeobox DNA-binding region spans 268 to 327 (TKRMRTSFKHHQLRTMKSYFAINHNPDAKDLKQLAQKTGLTKRVLQGEQCSGFNSHTTRR).

Its subcellular location is the nucleus. May be involved in gonadal development. The polypeptide is LIM/homeobox protein Lhx9 (lhx9) (Xenopus laevis (African clawed frog)).